The chain runs to 114 residues: UPF0145 protein PF1756 (114 aa).

This sequence belongs to the UPF0145 family.

This chain is UPF0145 protein PF1756, found in Pyrococcus furiosus (strain ATCC 43587 / DSM 3638 / JCM 8422 / Vc1).